The primary structure comprises 755 residues: Protein MTSS 1 (755 aa).

An IMD domain is found at 1–250 (MEAVIEKECS…EQVILDLKGS (250 aa)). The stretch at 108–155 (LQEQMEEWKKVANQLDKDHAKEYKKARQEIKKKSSDTLKLQKKAKKGR) forms a coiled coil. Disordered stretches follow at residues 139–159 (KKSS…GDIQ) and 255–305 (SYQT…RSSN). Position 258 is a phosphothreonine (threonine 258). 4 positions are modified to phosphoserine: serine 261, serine 262, serine 271, and serine 322. Residues 327–351 (QDAFQSKSPSPMPPEAPNQLSNGFS) form a disordered region. A Phosphothreonine modification is found at threonine 425. Disordered regions lie at residues 428–470 (RRKE…TRPG), 490–513 (DTQR…TTPC), and 563–755 (QAKR…PRFS). Positions 443 to 453 (TTASGPPAAAE) are enriched in low complexity. Threonine 603 bears the Phosphothreonine mark. A compositionally biased stretch (low complexity) spans 608 to 623 (PIPIKTPVIPVKTPTV). Residues serine 644 and serine 647 each carry the phosphoserine modification. A compositionally biased stretch (polar residues) spans 656-671 (GVTSMPSSMWSGQASV). The WH2 domain occupies 727-744 (QGEDMLNAIRRGVKLKKT).

This sequence belongs to the MTSS family. Binds to actin. Binds to the cytoplasmic domain of receptor protein tyrosine phosphatase delta. Expressed in many tissues, including spleen, thymus, prostate, testis, uterus, colon, and peripheral blood.

It is found in the cytoplasm. The protein localises to the cytoskeleton. Its function is as follows. May be related to cancer progression or tumor metastasis in a variety of organ sites, most likely through an interaction with the actin cytoskeleton. This is Protein MTSS 1 from Homo sapiens (Human).